A 353-amino-acid chain; its full sequence is Photosystem II protein D1 (353 aa).

N-acetylthreonine is present on threonine 2. Threonine 2 carries the post-translational modification Phosphothreonine. The next 3 membrane-spanning stretches (helical) occupy residues 29 to 46, 118 to 133, and 142 to 156; these read YIGW…TATS, HFLL…EWEL, and WIAV…AATA. Histidine 118 provides a ligand contact to chlorophyll a. Residue tyrosine 126 coordinates pheophytin a. Aspartate 170 and glutamate 189 together coordinate [CaMn4O5] cluster. The helical transmembrane segment at 197 to 218 threads the bilayer; the sequence is FHMLGVAGVFGGSLFSAMHGSL. Histidine 198 contributes to the chlorophyll a binding site. Residues histidine 215 and 264-265 contribute to the a quinone site; that span reads SF. Histidine 215 contacts Fe cation. Histidine 272 lines the Fe cation pocket. Residues 274 to 288 traverse the membrane as a helical segment; it reads FLAAWPVVGIWFTAL. Histidine 332, glutamate 333, aspartate 342, and alanine 344 together coordinate [CaMn4O5] cluster. Positions 345 to 353 are excised as a propeptide; sequence AVEANSIDG.

This sequence belongs to the reaction center PufL/M/PsbA/D family. PSII is composed of 1 copy each of membrane proteins PsbA, PsbB, PsbC, PsbD, PsbE, PsbF, PsbH, PsbI, PsbJ, PsbK, PsbL, PsbM, PsbT, PsbX, PsbY, PsbZ, Psb30/Ycf12, at least 3 peripheral proteins of the oxygen-evolving complex and a large number of cofactors. It forms dimeric complexes. The D1/D2 heterodimer binds P680, chlorophylls that are the primary electron donor of PSII, and subsequent electron acceptors. It shares a non-heme iron and each subunit binds pheophytin, quinone, additional chlorophylls, carotenoids and lipids. D1 provides most of the ligands for the Mn4-Ca-O5 cluster of the oxygen-evolving complex (OEC). There is also a Cl(-1) ion associated with D1 and D2, which is required for oxygen evolution. The PSII complex binds additional chlorophylls, carotenoids and specific lipids. is required as a cofactor. Tyr-161 forms a radical intermediate that is referred to as redox-active TyrZ, YZ or Y-Z. In terms of processing, C-terminally processed by CTPA; processing is essential to allow assembly of the oxygen-evolving complex and thus photosynthetic growth.

It is found in the plastid. It localises to the chloroplast thylakoid membrane. The catalysed reaction is 2 a plastoquinone + 4 hnu + 2 H2O = 2 a plastoquinol + O2. Its function is as follows. Photosystem II (PSII) is a light-driven water:plastoquinone oxidoreductase that uses light energy to abstract electrons from H(2)O, generating O(2) and a proton gradient subsequently used for ATP formation. It consists of a core antenna complex that captures photons, and an electron transfer chain that converts photonic excitation into a charge separation. The D1/D2 (PsbA/PsbD) reaction center heterodimer binds P680, the primary electron donor of PSII as well as several subsequent electron acceptors. The sequence is that of Photosystem II protein D1 from Cryptomeria japonica (Japanese cedar).